Reading from the N-terminus, the 307-residue chain is uncharacterized protein (307 aa).

The region spanning 11–68 (IRLRHLHTFVAVAQQGTLGRAAETLNLSQPALSKTLNELEQLTGARLFERGRQGAQLT) is the HTH lysR-type domain. The segment at residues 28 to 47 (LGRAAETLNLSQPALSKTLN) is a DNA-binding region (H-T-H motif).

Belongs to the LysR transcriptional regulatory family.

This is an uncharacterized protein from Escherichia coli (strain K12).